The sequence spans 516 residues: UDP-N-acetylmuramyl-tripeptide synthetase (516 aa).

Ser36 contributes to the UDP-N-acetyl-alpha-D-muramoyl-L-alanyl-D-glutamate binding site. 113-119 contacts ATP; the sequence is GTKGKTT. UDP-N-acetyl-alpha-D-muramoyl-L-alanyl-D-glutamate is bound by residues 159-160, Ser186, and Arg194; that span reads TT. At Lys228 the chain carries N6-carboxylysine.

Belongs to the MurCDEF family. MurE subfamily. Carboxylation is probably crucial for Mg(2+) binding and, consequently, for the gamma-phosphate positioning of ATP.

The protein localises to the cytoplasm. It functions in the pathway cell wall biogenesis; peptidoglycan biosynthesis. In terms of biological role, catalyzes the addition of an amino acid to the nucleotide precursor UDP-N-acetylmuramoyl-L-alanyl-D-glutamate (UMAG) in the biosynthesis of bacterial cell-wall peptidoglycan. The polypeptide is UDP-N-acetylmuramyl-tripeptide synthetase (Limosilactobacillus reuteri (strain DSM 20016) (Lactobacillus reuteri)).